A 274-amino-acid polypeptide reads, in one-letter code: Nitrogenase iron protein (274 aa).

8–15 (GKGGIGKS) contributes to the ATP binding site. Residue cysteine 94 coordinates [4Fe-4S] cluster. At arginine 97 the chain carries ADP-ribosylarginine; by dinitrogenase reductase ADP-ribosyltransferase. Cysteine 129 contacts [4Fe-4S] cluster.

The protein belongs to the NifH/BchL/ChlL family. In terms of assembly, homodimer. [4Fe-4S] cluster is required as a cofactor. The reversible ADP-ribosylation of Arg-97 inactivates the nitrogenase reductase and regulates nitrogenase activity.

The catalysed reaction is N2 + 8 reduced [2Fe-2S]-[ferredoxin] + 16 ATP + 16 H2O = H2 + 8 oxidized [2Fe-2S]-[ferredoxin] + 2 NH4(+) + 16 ADP + 16 phosphate + 6 H(+). Functionally, the key enzymatic reactions in nitrogen fixation are catalyzed by the nitrogenase complex, which has 2 components: the iron protein and the molybdenum-iron protein. The protein is Nitrogenase iron protein of Methanocella arvoryzae (strain DSM 22066 / NBRC 105507 / MRE50).